The sequence spans 566 residues: Poly(A) polymerase pla1 (566 aa).

Residues 86–88, 99–101, Asp-153, Lys-214, Tyr-223, and 232–233 contribute to the ATP site; these read YGS, DID, and GV. Mg(2+) is bound by residues Asp-99, Asp-101, and Asp-153. Disordered regions lie at residues 437–463 and 530–566; these read HEKL…SENG and DEVF…VSTA.

This sequence belongs to the poly(A) polymerase family. It depends on Mg(2+) as a cofactor. Mn(2+) is required as a cofactor.

The protein localises to the nucleus. It catalyses the reaction RNA(n) + ATP = RNA(n)-3'-adenine ribonucleotide + diphosphate. Polymerase that creates the 3'-poly(A) tail of mRNA's. May acquire specificity through interaction with a cleavage and polyadenylation factor (CF I). The protein is Poly(A) polymerase pla1 (pla1) of Schizosaccharomyces pombe (strain 972 / ATCC 24843) (Fission yeast).